We begin with the raw amino-acid sequence, 598 residues long: MDSHVGEVDIFQQCKYIHEVELVNMKLQMRILETHIETKDRLLRNLEDIIDEQESRIANMEDFIQGRATSYTNRSNMLKGISVLSLDFGNLSEENLRLKNALSQMQKVARVNELLETDEDYESDMTSNEDRFALSRDSSCSVPRSVSPQPTGDVIKPYPQMVQSMREEGHWKKLQRCAEELKTEKDELKRLALDTKDAFNVCMAEMRMMLTSKTTDFFRVLIERYKAEMEKRKQLHNQLVELNGNIRVFYRIRPQLASETDNQKPVVVIDEMDNGVVHVSNTTGTRKTSAGADKVIPTDFSQDQIFNEVSPIITSCIDGYNVCIFAYGHTGSGKTYTMDGPVTMPGINQRAIMQLFETAKERTGDIKYDIKVAMMEIYNEKIRDLLNTSNTNLAIRQTEEGRSSIPGLEEVSVNSAEEVTETLARGRKNKAVAATEANIESSRSHVIVRVLVSATNLITKATTVGRLNLVDLAGSERVSQTNATGQLLKEAQAINKSLSELGNVVLALRQNQKHIPFRNCQLTRILEDSLNGDSKTLVIVHLSPDAKSLNESISSVNFAEKIGQVFTKSGTMKREPTRRSMTGISSGQRREIPASPRK.

2 coiled-coil regions span residues 19–66 (EVEL…FIQG) and 89–118 (GNLS…LETD). The segment at 133-155 (ALSRDSSCSVPRSVSPQPTGDVI) is disordered. Residues 136–150 (RDSSCSVPRSVSPQP) show a composition bias toward polar residues. Residues 170–248 (HWKKLQRCAE…LVELNGNIRV (79 aa)) adopt a coiled-coil conformation. The Kinesin motor domain occupies 245 to 565 (NIRVFYRIRP…VNFAEKIGQV (321 aa)). 328–335 (GHTGSGKT) serves as a coordination point for ATP. Residues 569-598 (SGTMKREPTRRSMTGISSGQRREIPASPRK) are disordered.

This sequence belongs to the TRAFAC class myosin-kinesin ATPase superfamily. Kinesin family.

Its subcellular location is the cytoplasm. The protein localises to the cytoskeleton. The chain is Kinesin-like protein klp-3 (klp-3) from Caenorhabditis elegans.